The chain runs to 153 residues: Transcriptional repressor NrdR (153 aa).

A zinc finger spans residues 3–34 (CPFCGYEDSKVVDTRPTNEGKTIKRRRECLKC). Residues 49 to 139 (ILVIKKDNRR…VYRQFKDINT (91 aa)) enclose the ATP-cone domain.

This sequence belongs to the NrdR family. Zn(2+) is required as a cofactor.

Its function is as follows. Negatively regulates transcription of bacterial ribonucleotide reductase nrd genes and operons by binding to NrdR-boxes. The sequence is that of Transcriptional repressor NrdR from Caldicellulosiruptor bescii (strain ATCC BAA-1888 / DSM 6725 / KCTC 15123 / Z-1320) (Anaerocellum thermophilum).